The sequence spans 383 residues: Acetylornithine deacetylase (383 aa).

Histidine 80 is a Zn(2+) binding site. Aspartate 82 is a catalytic residue. Aspartate 112 serves as a coordination point for Zn(2+). Residue glutamate 144 is part of the active site. The Zn(2+) site is built by glutamate 145, glutamate 169, and histidine 355.

It belongs to the peptidase M20A family. ArgE subfamily. Homodimer. Zn(2+) is required as a cofactor. Co(2+) serves as cofactor. Requires glutathione as cofactor.

It localises to the cytoplasm. It carries out the reaction N(2)-acetyl-L-ornithine + H2O = L-ornithine + acetate. It functions in the pathway amino-acid biosynthesis; L-arginine biosynthesis; L-ornithine from N(2)-acetyl-L-ornithine (linear): step 1/1. Functionally, catalyzes the hydrolysis of the amide bond of N(2)-acetylated L-amino acids. Cleaves the acetyl group from N-acetyl-L-ornithine to form L-ornithine, an intermediate in L-arginine biosynthesis pathway, and a branchpoint in the synthesis of polyamines. This is Acetylornithine deacetylase from Shigella boydii serotype 4 (strain Sb227).